Reading from the N-terminus, the 249-residue chain is UDP-2,3-diacylglucosamine hydrolase (249 aa).

The Mn(2+) site is built by Asp-7, His-9, Asp-40, Asn-78, and His-113. 78–79 (NR) contacts substrate. 5 residues coordinate substrate: Asp-121, Ser-159, Thr-163, Lys-166, and His-194. Residues His-194 and His-196 each coordinate Mn(2+).

Belongs to the LpxH family. Mn(2+) is required as a cofactor.

The protein localises to the cell inner membrane. It carries out the reaction UDP-2-N,3-O-bis[(3R)-3-hydroxytetradecanoyl]-alpha-D-glucosamine + H2O = 2-N,3-O-bis[(3R)-3-hydroxytetradecanoyl]-alpha-D-glucosaminyl 1-phosphate + UMP + 2 H(+). The protein operates within glycolipid biosynthesis; lipid IV(A) biosynthesis; lipid IV(A) from (3R)-3-hydroxytetradecanoyl-[acyl-carrier-protein] and UDP-N-acetyl-alpha-D-glucosamine: step 4/6. Hydrolyzes the pyrophosphate bond of UDP-2,3-diacylglucosamine to yield 2,3-diacylglucosamine 1-phosphate (lipid X) and UMP by catalyzing the attack of water at the alpha-P atom. Involved in the biosynthesis of lipid A, a phosphorylated glycolipid that anchors the lipopolysaccharide to the outer membrane of the cell. The chain is UDP-2,3-diacylglucosamine hydrolase from Pseudomonas fluorescens (strain SBW25).